A 109-amino-acid polypeptide reads, in one-letter code: Sperm-specific class P protein 16 (109 aa).

An MSP domain is found at 2-109 (SLTADPPACT…TVTIPMSATA (108 aa)).

In terms of tissue distribution, expressed at higher level in testis.

In Caenorhabditis elegans, this protein is Sperm-specific class P protein 16 (ssp-16).